Reading from the N-terminus, the 1086-residue chain is Lon protease homolog, mitochondrial (1086 aa).

The transit peptide at 1–55 (MLRTSCTSSLRRVVGKYVVSPLVASQIRFATSSVRSQPYLLNSELTELPAQFKRY) directs the protein to the mitochondrion. The tract at residues 61-176 (TEKPEGDVPE…EPNEIVTNAG (116 aa)) is disordered. The span at 69–83 (PESGPEPSGESGISE) shows a compositional bias: low complexity. Basic and acidic residues predominate over residues 85-120 (SNVENDKHDGNDEIKPEAEKNEKDEIEKPEIDKDAI). Positions 124 to 163 (DGVSESSVENVSGSSSAAGGASAPPSGNSNNNNNNNNNNN) are enriched in low complexity. The Lon N-terminal domain maps to 183-406 (LLAIPMKDRP…KALELLKVEL (224 aa)). An ATP-binding site is contributed by 558 to 565 (GPPGTGKT). 2 stretches are compositionally biased toward basic and acidic residues: residues 767-782 (EAREGESKSKSEEAKS) and 815-827 (KVDEAKPVESEEL). 2 disordered regions span residues 767-788 (EAREGESKSKSEEAKSEAITGS) and 800-835 (KAQSIEEPSVESASQKVDEAKPVESEELKSDEEEEE). The Lon proteolytic domain maps to 871-1059 (IPPPGVATGL…QDVFDEIFPN (189 aa)). Active-site residues include Ser965 and Lys1008.

It belongs to the peptidase S16 family. As to quaternary structure, homohexamer or homoheptamer. Organized in a ring with a central cavity.

The protein resides in the mitochondrion matrix. It catalyses the reaction Hydrolysis of proteins in presence of ATP.. ATP-dependent serine protease that mediates the selective degradation of misfolded, unassembled or oxidatively damaged polypeptides as well as certain short-lived regulatory proteins in the mitochondrial matrix. May also have a chaperone function in the assembly of inner membrane protein complexes. Participates in the regulation of mitochondrial gene expression and in the maintenance of the integrity of the mitochondrial genome. Binds to mitochondrial DNA in a site-specific manner. This Scheffersomyces stipitis (strain ATCC 58785 / CBS 6054 / NBRC 10063 / NRRL Y-11545) (Yeast) protein is Lon protease homolog, mitochondrial.